Consider the following 90-residue polypeptide: Chromosomal protein MC1c (90 aa).

Functionally, protects DNA against thermal denaturation and modulates transcription. The protein is Chromosomal protein MC1c of Methanothrix soehngenii (Methanosaeta concilii).